Consider the following 376-residue polypeptide: 1-acyl-sn-glycerol-3-phosphate acyltransferase gamma (376 aa).

Residues 1 to 124 (MGLLAFLKTQ…LGSSKVLAKK (124 aa)) lie on the Cytoplasmic side of the membrane. The HXXXXD motif signature appears at 96–101 (HNFEID). A helical transmembrane segment spans residues 125–145 (ELLYVPLIGWTWYFLEIVFCK). Residues 146 to 316 (RKWEEDRDTV…TLLNFLSWAT (171 aa)) lie on the Lumenal side of the membrane. The chain crosses the membrane as a helical span at residues 317–339 (ILLSPLFSFVLGVFASGSPLLIL). Residues 340–376 (TFLGFVGAASFGVRRLIGVTEIEKGSSYGNQEFKKKE) lie on the Cytoplasmic side of the membrane.

The protein belongs to the 1-acyl-sn-glycerol-3-phosphate acyltransferase family. Widely expressed with highest levels in testis, pancreas and kidney, followed by spleen, lung, adipose tissue and liver.

The protein localises to the endoplasmic reticulum membrane. It localises to the nucleus envelope. The catalysed reaction is a 1-acyl-sn-glycero-3-phosphate + an acyl-CoA = a 1,2-diacyl-sn-glycero-3-phosphate + CoA. It carries out the reaction pentadecanoyl-CoA + 1-(9Z-octadecenoyl)-sn-glycero-3-phosphate = 1-(9Z)-octadecenoyl-2-pentadecanoyl-sn-glycero-3-phosphate + CoA. It catalyses the reaction heptadecanoyl-CoA + 1-(9Z-octadecenoyl)-sn-glycero-3-phosphate = 1-(9Z)-octadecenoyl-2-heptadecanoyl-sn-glycero-3-phosphate + CoA. The enzyme catalyses 1-(9Z-octadecenoyl)-sn-glycero-3-phosphate + octadecanoyl-CoA = 1-(9Z-octadecenoyl)-2-octadecanoyl-sn-glycero-3-phosphate + CoA. The catalysed reaction is nonadecanoyl-CoA + 1-(9Z-octadecenoyl)-sn-glycero-3-phosphate = 1-(9Z)-octadecenoyl-2-nonadecanoyl-sn-glycero-3-phosphate + CoA. It carries out the reaction 1-(9Z-octadecenoyl)-sn-glycero-3-phosphate + (5Z,8Z,11Z,14Z)-eicosatetraenoyl-CoA = 1-(9Z)-octadecenoyl-2-(5Z,8Z,11Z,14Z)-eicosatetraenoyl-sn-glycero-3-phosphate + CoA. It catalyses the reaction 1-(9Z-octadecenoyl)-sn-glycero-3-phosphate + (9Z)-octadecenoyl-CoA = 1,2-di-(9Z-octadecenoyl)-sn-glycero-3-phosphate + CoA. The enzyme catalyses 1-(9Z-octadecenoyl)-sn-glycero-3-phosphate + (9Z,12Z)-octadecadienoyl-CoA = 1-(9Z)-octadecenoyl-2-(9Z,12Z)-octadecadienoyl-sn-glycero-3-phosphate + CoA. The catalysed reaction is 1-(9Z-octadecenoyl)-sn-glycero-3-phosphocholine + (5Z,8Z,11Z,14Z)-eicosatetraenoyl-CoA = 1-(9Z)-octadecenoyl-2-(5Z,8Z,11Z,14Z)-icosatetraenoyl-sn-glycero-3-phosphocholine + CoA. It carries out the reaction 1-(9Z-octadecenoyl)-sn-glycero-3-phospho-(1D-myo-inositol) + (5Z,8Z,11Z,14Z)-eicosatetraenoyl-CoA = 1-(9Z-octadecenoyl)-2-(5Z,8Z,11Z,14Z-eicosatetraenoyl)-sn-glycero-3-phospho-1D-myo-inositol + CoA. It catalyses the reaction 1-(9Z-octadecenoyl)-sn-glycero-3-phospho-L-serine + (5Z,8Z,11Z,14Z)-eicosatetraenoyl-CoA = 1-(9Z-octadecenoyl)-2-(5Z,8Z,11Z,14Z-eicosatetraenoyl)-sn-glycero-3-phospho-L-serine + CoA. The enzyme catalyses 1-hexadecanoyl-sn-glycero-3-phosphate + (9Z)-octadecenoyl-CoA = 1-hexadecanoyl-2-(9Z-octadecenoyl)-sn-glycero-3-phosphate + CoA. The catalysed reaction is 1-hexadecanoyl-sn-glycero-3-phosphate + (5Z,8Z,11Z,14Z)-eicosatetraenoyl-CoA = 1-hexadecanoyl-2-(5Z,8Z,11Z,14Z-eicosatetraenoyl)-sn-glycero-3-phosphate + CoA. It carries out the reaction 1-heptadecanoyl-sn-glycero-3-phosphate + (5Z,8Z,11Z,14Z)-eicosatetraenoyl-CoA = 1-heptadecanoyl-2-(5Z,8Z,11Z,14Z)-eicosatetraenoyl-sn-glycero-3-phosphate + CoA. It catalyses the reaction 1-octadecanoyl-sn-glycero-3-phosphate + (9Z)-octadecenoyl-CoA = 1-octadecanoyl-2-(9Z-octadecenoyl)-sn-glycero-3-phosphate + CoA. The enzyme catalyses 1-octadecanoyl-sn-glycero-3-phosphate + (5Z,8Z,11Z,14Z)-eicosatetraenoyl-CoA = 1-octadecanoyl-2-(5Z,8Z,11Z,14Z-eicosatetraenoyl)-sn-glycero-3-phosphate + CoA. The catalysed reaction is 1-(9Z-octadecenoyl)-sn-glycero-3-phosphate + hexadecanoyl-CoA = 1-hexadecanoyl-2-(9Z-octadecenoyl)-sn-glycero-3-phosphate + CoA. It carries out the reaction 1-O-(9Z-octadecenyl)-sn-glycero-3-phosphate + (5Z,8Z,11Z,14Z)-eicosatetraenoyl-CoA = 1-O-(9Z-octadecenyl)-2-(5Z,8Z,11Z,14Z-eicosatetraenoyl)-sn-glycero-3-phosphate + CoA. It catalyses the reaction a 1-acyl-sn-glycero-3-phospho-(1D-myo-inositol) + (5Z,8Z,11Z,14Z)-eicosatetraenoyl-CoA = a 1-acyl-2-(5Z,8Z,11Z,14Z-eicosatetraenoyl)-sn-glycero-3-phospho-(1D-myo-inositol) + CoA. It functions in the pathway phospholipid metabolism; CDP-diacylglycerol biosynthesis; CDP-diacylglycerol from sn-glycerol 3-phosphate: step 2/3. In terms of biological role, converts 1-acyl-sn-glycerol-3-phosphate (lysophosphatidic acid or LPA) into 1,2-diacyl-sn-glycerol-3-phosphate (phosphatidic acid or PA) by incorporating an acyl moiety at the sn-2 position of the glycerol backbone. Acts on LPA containing saturated or unsaturated fatty acids C16:0-C20:4 at the sn-1 position using C18:1, C20:4 or C18:2-CoA as the acyl donor. Also acts on lysophosphatidylcholine, lysophosphatidylinositol and lysophosphatidylserine using C18:1 or C20:4-CoA. Has a preference for arachidonoyl-CoA as a donor. Also has a modest lysophosphatidylinositol acyltransferase (LPIAT) activity, converts lysophosphatidylinositol (LPI) into phosphatidylinositol. The protein is 1-acyl-sn-glycerol-3-phosphate acyltransferase gamma (AGPAT3) of Homo sapiens (Human).